Reading from the N-terminus, the 315-residue chain is Glutathione synthetase (315 aa).

Residues 125–310 (KLYTAWFADL…ITGMLMDAIE (186 aa)) form the ATP-grasp domain. Residue 151 to 207 (WEKHGDIIMKPLDGMGGASIFRVKEGDPNIGVIAETLTELGNRYCMAQNYLPAIKDG) coordinates ATP. Residues Glu-281 and Asn-283 each contribute to the Mg(2+) site.

Belongs to the prokaryotic GSH synthase family. Requires Mg(2+) as cofactor. Mn(2+) is required as a cofactor.

The catalysed reaction is gamma-L-glutamyl-L-cysteine + glycine + ATP = glutathione + ADP + phosphate + H(+). The protein operates within sulfur metabolism; glutathione biosynthesis; glutathione from L-cysteine and L-glutamate: step 2/2. The polypeptide is Glutathione synthetase (Salmonella typhi).